The primary structure comprises 799 residues: Lon protease (799 aa).

The Lon N-terminal domain maps to 7-200 (LPVLPLRDIV…KVFALMEGEI (194 aa)). Position 352–359 (352–359 (GPPGVGKT)) interacts with ATP. The Lon proteolytic domain occupies 587–768 (VDQVGIVTGL…DEVLKHALTG (182 aa)). Active-site residues include Ser674 and Lys717. Positions 772-799 (PVEWNEAEEPITTSAKKDDGDSDAMLTH) are disordered.

It belongs to the peptidase S16 family. As to quaternary structure, homohexamer. Organized in a ring with a central cavity.

It is found in the cytoplasm. It catalyses the reaction Hydrolysis of proteins in presence of ATP.. Its function is as follows. ATP-dependent serine protease that mediates the selective degradation of mutant and abnormal proteins as well as certain short-lived regulatory proteins. Required for cellular homeostasis and for survival from DNA damage and developmental changes induced by stress. Degrades polypeptides processively to yield small peptide fragments that are 5 to 10 amino acids long. Binds to DNA in a double-stranded, site-specific manner. CcrM is an important target of the Lon protease pathway in C.crescentus. The chain is Lon protease from Caulobacter vibrioides (strain ATCC 19089 / CIP 103742 / CB 15) (Caulobacter crescentus).